The primary structure comprises 448 residues: MLRLFSLALITCLIYYSKNQGPSALVAAVGFGIAGYLATDMLIPRVGKSFIKIGLFGKDLSKPGRPVLPETIGAIPAAVYLFVMFIYIPFIFYKYMVITTSGGGHRDVSVVEDNGMNSNIFPHDKLSEYLSAILCLESTVLLGIADDLFDLRWRHKFFLPAIAAIPLLMVYYVDFGVTHVLIPGFMERWLKKTSVDLGLWYYVYMASMAIFCPNSINILAGVNGLEVGQCIVLAILALLNDLLYFSMGPLATRDSHRFSAVLIIPFLGVSLALWKWNRWPATVFVGDTYCYFAGMVFAVVGILGHFSKTMLLLFIPQIVNFIYSCPQLFKLVPCPRHRLPKFNEKDGLMYPSRANLKEEPPKSIFKPILKLLYCLHLIDLEFDENNEIISTSNMTLINLTLVWFGPMREDKLCNTILKLQFCIGILALLGRHAIGAIIFGHDNLWTVR.

Residues 24–44 form a helical membrane-spanning segment; it reads ALVAAVGFGIAGYLATDMLIP. UDP-N-acetyl-alpha-D-glucosamine is bound by residues 58–60 and Glu-70; that span reads KDL. Transmembrane regions (helical) follow at residues 72-92 and 129-149; these read IGAI…PFIF and YLSA…DDLF. Lys-156 is a binding site for dolichyl phosphate. A run of 2 helical transmembrane segments spans residues 157-177 and 202-222; these read FFLP…DFGV and YVYM…LAGV. 210 to 218 contacts dolichyl phosphate; the sequence is IFCPNSINI. Asn-217 is a binding site for Mg(2+). UDP-N-acetyl-alpha-D-glucosamine is bound at residue Asn-223. 4 helical membrane-spanning segments follow: residues 231 to 251, 256 to 276, 283 to 303, and 309 to 329; these read IVLA…GPLA, HRFS…LWKW, VFVG…VGIL, and TMLL…PQLF. Asp-287 is a binding site for Mg(2+). 336–338 lines the UDP-N-acetyl-alpha-D-glucosamine pocket; sequence RHR. A run of 2 helical transmembrane segments spans residues 387–407 and 419–439; these read EIIS…FGPM and LQFC…AIIF.

It belongs to the glycosyltransferase 4 family. Requires Mg(2+) as cofactor.

The protein resides in the endoplasmic reticulum membrane. It catalyses the reaction a di-trans,poly-cis-dolichyl phosphate + UDP-N-acetyl-alpha-D-glucosamine = an N-acetyl-alpha-D-glucosaminyl-diphospho-di-trans,poly-cis-dolichol + UMP. It functions in the pathway protein modification; protein glycosylation. With respect to regulation, inhibited by natural nucleoside antibiotic tunicamycin, which acts as a structural analog and competitor of UDP-GlcNAc. In terms of biological role, UDP-N-acetylglucosamine--dolichyl-phosphate N-acetylglucosaminephosphotransferase that operates in the biosynthetic pathway of dolichol-linked oligosaccharides, the glycan precursors employed in protein asparagine (N)-glycosylation. The assembly of dolichol-linked oligosaccharides begins on the cytosolic side of the endoplasmic reticulum membrane and finishes in its lumen. The sequential addition of sugars to dolichol pyrophosphate produces dolichol-linked oligosaccharides containing fourteen sugars, including two GlcNAcs, nine mannoses and three glucoses. Once assembled, the oligosaccharide is transferred from the lipid to nascent proteins by oligosaccharyltransferases. Catalyzes the initial step of dolichol-linked oligosaccharide biosynthesis, transfering GlcNAc-1-P from cytosolic UDP-GlcNAc onto the carrier lipid dolichyl phosphate (P-dolichol), yielding GlcNAc-P-P-dolichol embedded in the cytoplasmic leaflet of the endoplasmic reticulum membrane. This is UDP-N-acetylglucosamine--dolichyl-phosphate N-acetylglucosaminephosphotransferase (ALG7) from Saccharomyces cerevisiae (strain ATCC 204508 / S288c) (Baker's yeast).